Here is a 375-residue protein sequence, read N- to C-terminus: tRNA-specific 2-thiouridylase MnmA (375 aa).

ATP contacts are provided by residues 9-16 (AMSGGVDS) and L35. C105 (nucleophile) is an active-site residue. Cysteines 105 and 201 form a disulfide. G129 serves as a coordination point for ATP. The segment at 151-153 (KNQ) is interaction with tRNA. The active-site Cysteine persulfide intermediate is C201. The tract at residues 307-308 (RY) is interaction with tRNA.

Belongs to the MnmA/TRMU family.

The protein localises to the cytoplasm. The enzyme catalyses S-sulfanyl-L-cysteinyl-[protein] + uridine(34) in tRNA + AH2 + ATP = 2-thiouridine(34) in tRNA + L-cysteinyl-[protein] + A + AMP + diphosphate + H(+). In terms of biological role, catalyzes the 2-thiolation of uridine at the wobble position (U34) of tRNA, leading to the formation of s(2)U34. The polypeptide is tRNA-specific 2-thiouridylase MnmA (Leptospira interrogans serogroup Icterohaemorrhagiae serovar copenhageni (strain Fiocruz L1-130)).